A 499-amino-acid polypeptide reads, in one-letter code: MGEGAWWAVAAVVAALAVVALDAAVRAAHAWYWTASLGAGRRGRLPPGDMGWPLVGGMWAFLRAFKSGRPDSFIDSFARRFGRAGLYRAFMFSSPTIMATTPEACKQVLMDDDAFVTGWPKATVALIGPKSFVNMGYDEHRRLRKLTAAPINGFDALTSYLGFIDDTVVTTLRGWSERGGDGHFEFLTELRRMTFRIIVQIFMGGADERTAAELERTYTELNYGMRAMAIDLPGFAYHKAIRARRRLVAALQRVLDERRARGGKTAAGAAAPVDMMDRLIAVEDEGGRRLQDDEIIDVLVMYLNAGHESSGHITMWATVFLQENPEILAKAKAEQEAIMRSIPPGQKGLTLRDFRKMAYLSQVVDETLRFVNISFVSFRQATRDVFVNGYLIPKGWKVQLWYRSVHMDPQVYPDPKKFDPSRWEGPPPRAGTFLPFGLGTRLCPGNDLAKLEISVFLHHFLLGYKLTRKNPNCRVRYLPHPRPVDNCLAKITRLSSSHG.

Residues 5 to 25 (AWWAVAAVVAALAVVALDAAV) traverse the membrane as a helical segment. Residue Cys-443 participates in heme binding.

The protein belongs to the cytochrome P450 family. Requires heme as cofactor.

It is found in the endoplasmic reticulum membrane. The enzyme catalyses ent-kaur-16-en-19-oate + 3 reduced [NADPH--hemoprotein reductase] + 3 O2 = gibberellin A12 + 3 oxidized [NADPH--hemoprotein reductase] + 4 H2O + 4 H(+). It carries out the reaction ent-kaur-16-en-19-oate + reduced [NADPH--hemoprotein reductase] + O2 = ent-7alpha-hydroxykaur-16-en-19-oate + oxidized [NADPH--hemoprotein reductase] + H2O + H(+). The catalysed reaction is ent-7alpha-hydroxykaur-16-en-19-oate + reduced [NADPH--hemoprotein reductase] + O2 = gibberellin A12 aldehyde + oxidized [NADPH--hemoprotein reductase] + 2 H2O + H(+). It catalyses the reaction gibberellin A12 aldehyde + reduced [NADPH--hemoprotein reductase] + O2 = gibberellin A12 + oxidized [NADPH--hemoprotein reductase] + H2O + 2 H(+). It functions in the pathway plant hormone biosynthesis; gibberellin biosynthesis. Functionally, catalyzes three successive oxidations of ent-kaurenoic acid giving gibberellin 12 (GA12), a key step in gibberellins (GAs) biosynthesis. GAs, which are involved many processes, including stem elongation, play a central role in plant development. This is Ent-kaurenoic acid oxidase 1 from Hordeum vulgare (Barley).